We begin with the raw amino-acid sequence, 149 residues long: uncharacterized protein (149 aa).

The helical transmembrane segment at 124 to 144 threads the bilayer; that stretch reads IIIIALIIILANYAPSIIGKI.

The protein belongs to the M.jannaschii MJ0023/MJ0349/MJ1072/MJ1074/MJ1107/MJECL16 family.

It is found in the membrane. This is an uncharacterized protein from Methanocaldococcus jannaschii (strain ATCC 43067 / DSM 2661 / JAL-1 / JCM 10045 / NBRC 100440) (Methanococcus jannaschii).